A 4730-amino-acid polypeptide reads, in one-letter code: Dynein heavy chain, cytoplasmic (4730 aa).

Disordered stretches follow at residues 1-23 (MEDQ…VVTP) and 91-120 (TINS…QQQS). A stem region spans residues 1–1935 (MEDQQINVDS…VIHMANATFY (1935 aa)). Positions 10–23 (SPTSGTNTPPVVTP) are enriched in low complexity. Positions 867 to 900 (VRKLSTSINNFRDKVDDLIVKYSEIKKQLDGLKS) form a coiled coil. The interval 964-1016 (EDQKDSQSTSGSSNKGGKLNRMNYSIRNKSDEENSSDLTQPQQSQQQQQTISI) is disordered. Over residues 969 to 978 (SQSTSGSSNK) the composition is skewed to polar residues. Positions 1002 to 1016 (TQPQQSQQQQQTISI) are enriched in low complexity. Coiled-coil stretches lie at residues 1204–1224 (EKMN…EKLS), 1343–1372 (ALET…QALD), 1425–1441 (RKVR…LKNL), and 1661–1689 (AIER…YLER). AAA regions lie at residues 1936-2158 (YGFE…VLVS), 2238-2531 (KKIQ…FTRL), 2635-2885 (EVET…WDRA), and 2978-3252 (VFYE…QGRQ). 1974-1981 (GPAGTGKT) contacts ATP. Positions 2231–2253 (IQMDQLRKKIQEIAKQRHLVTKQ) form a coiled coil. 2276–2283 (GPSGGGKT) provides a ligand contact to ATP. The tract at residues 2437-2486 (EPFDPQEKEQQKRNENAQLQQQQQTTITSPILTSPPTTSSSSRSTTSTTS) is disordered. Basic and acidic residues predominate over residues 2441–2451 (PQEKEQQKRNE). Residues 2442-2462 (QEKEQQKRNENAQLQQQQQTT) are a coiled coil. A compositionally biased stretch (low complexity) spans 2454-2486 (QLQQQQQTTITSPILTSPPTTSSSSRSTTSTTS). ATP is bound by residues 2674–2681 (GPPGSGKT) and 3016–3023 (GVSGGGKS). Coiled coils occupy residues 3271 to 3349 (INEK…VQLD), 3483 to 3585 (AQTY…NTQM), and 3854 to 3881 (TLET…EISE). Residues 3271–3585 (INEKRDQLEE…QQSENFNTQM (315 aa)) form a stalk region. 2 AAA regions span residues 3638-3867 (LSKP…EIAL) and 4098-4312 (SHSF…SIDY). Residues 4432–4465 (KMQSSEEDGEDDQVSGSSKKESSSSSSEDKGKAK) form a disordered region. Residues 4449–4463 (SKKESSSSSSEDKGK) show a composition bias toward basic and acidic residues.

This sequence belongs to the dynein heavy chain family. As to quaternary structure, consists of at least two heavy chains and a number of intermediate and light chains.

It is found in the cytoplasm. The protein resides in the cytoskeleton. Cytoplasmic dynein acts as a motor for the intracellular retrograde motility of vesicles and organelles along microtubules. Dynein has ATPase activity; the force-producing power stroke is thought to occur on release of ADP. This Dictyostelium discoideum (Social amoeba) protein is Dynein heavy chain, cytoplasmic (dhcA).